Consider the following 311-residue polypeptide: Interleukin-20 receptor subunit beta (311 aa).

Residues 1–29 (MQTFTMVLEEIWTSLFMWFFYALIPCLLT) form the signal peptide. At 30 to 233 (DEVAILPAPQ…VEVQGEAIPL (204 aa)) the chain is on the extracellular side. Fibronectin type-III domains are found at residues 37 to 136 (APQN…RNST) and 144 to 228 (EITK…EVQG). N40 carries an N-linked (GlcNAc...) asparagine glycan. An intrachain disulfide couples C89 to C97. N134 carries an N-linked (GlcNAc...) asparagine glycan. C202 and C223 are joined by a disulfide. The helical transmembrane segment at 234–254 (VLALFAFVGFMLILVVVPLFV) threads the bilayer. At 255–311 (WKMGRLLQYSCCPVVVLPDTLKITNSPQKLISCRREEVDACATAVMSPEELLRAWIS) the chain is on the cytoplasmic side.

This sequence belongs to the type II cytokine receptor family. Heterodimer with IL20RA and heterodimer with IL22RA1. Widely expressed with highest levels in skin and testis. Highly expressed in psoriatic skin.

The protein localises to the membrane. The IL20RA/IL20RB dimer is a receptor for IL19, IL20 and IL24. The IL22RA1/IL20RB dimer is a receptor for IL20 and IL24. The sequence is that of Interleukin-20 receptor subunit beta (IL20RB) from Homo sapiens (Human).